We begin with the raw amino-acid sequence, 372 residues long: Adaptive-response sensory kinase SasA (372 aa).

One can recognise a Histidine kinase domain in the interval 147-360 (MVAHELRTPL…CFHFTVPVWQ (214 aa)). Residue His150 is modified to Phosphohistidine; by autocatalysis.

Homooligomerizes. Interacts with KaiC. Participates in the KaiBC complex, whose core is composed of a KaiC homohexamer and 6 KaiB.

It carries out the reaction ATP + protein L-histidine = ADP + protein N-phospho-L-histidine.. Its function is as follows. Member of the two-component regulatory system SasA/RpaA involved in genome-wide circadian gene expression. One of several clock output pathways. Participates in the Kai clock protein complex, the main circadian regulator in cyanobacteria, via its interaction with KaiC. KaiC enhances the autophosphorylation activity of SasA, which then transfers its phosphate group to RpaA to activate it. In addition to its output function, recruits fold-shifted KaiB (KaiB(fs)) to KaiC to cooperatively form the KaiB(6):KaiC(6) complex (independent of SasA kinase activity). Required for robustness of the circadian rhythm of gene expression and is involved in clock output, also required for adaptation to light/dark cycles. The protein is Adaptive-response sensory kinase SasA of Prochlorococcus marinus (strain AS9601).